The following is a 1146-amino-acid chain: MEPSDSTSTAMEEPDSLEVLVKTLDSQTRTFIVGAQMNVKEFKEHIAASVSIPSEKQRLIYQGRVLQDDKKLQDYNVGGKVIHLVERAPPQTQLPSGASSGTGSASATHGGGPLPGTRGPGASGHDRNANSYVMVGTFNLPSDGSAVDVHINMEQAPIQSEPRVRLVMAQHMIRDIQTLLSRMECRGGTQAQASQPPPQTPTVASETVALNSQTSEPVESEAPPREPMESEEMEERPPTQTPELPPSGPAPAGPAPAPETNAPNHPSPAEHVEVLQELQRLQRRLQPFLQRYCEVLGAAATTDYNNNHEGREEDQRLINLVGESLRLLGNTFVALSDLRCNLACAPPRHLHVVRPMSHYTTPMVLQQAAIPIQINVGTTVTMTGNGARPPPAPGAEAASPGSGQASSLPPSSATVDSSTEGAPPPGPAPPPATSHPRVIRISHQSVEPVVMMHMNIQDSGAQPGGVPSAPTGPLGPPGHGQSLGQQVPGFPTAPTRVVIARPTPPQARPSHPGGPPVSGALQGAGLGTNTSLAQMVSGLVGQLLMQPVLVAQGTPGMAPASASAPATAQAQAPAPAPAPAPAPATASASAGTTNTATTAGPAPGGPAQPPPPQPSAADLQFSQLLGNLLGPAGPGAGGPSLASPTITVAVPGVPAFLQGMTEFLQASQAAPPPPPPPPPPPPAPEQQTTPPPGSPSGGTASPGGLGPESLPPEFFTSVVQGVLSSLLGSLGARAGSSESIAAFIQRLSGSSNIFEPGADGALGFFGALLSLLCQNFSMVDVVMLLHGHFQPLQRLQPQLRSFFHQHYLGGQEPTSSNIRMATHTLITGLEEYVRESFSLVQVQPGVDIIRTNLEFLQEQFNSIAAHVLHCTDSGFGARLLELCNQGLFECLALNLHCLGGQQMELAAVINGRIRRMSRGVNPSLVSWLTTMMGLRLQVVLEHMPVGPDAILRYVRRIGDPPQALPEEPMEVQGAERTSPEPQREDASPAPGTTAEEAMSRGPPPAPEGGSRDEQDGASADAEPWAAAVPPEWVPIIQQDIQSQRKVKPQPPLSDAYLSGMPAKRRKTMQGEGPQLLLSEAVSRAAKAAGARPLTSPESLSRDLEAPEVQESYRQQLRSDIQKRLQEDPNYSPQRFPNAHRAFADDP.

Met1 is modified (N-acetylmethionine). Positions Leu17–Thr92 constitute a Ubiquitin-like domain. Disordered regions lie at residues Arg87 to Asn128, Arg186 to Pro268, Thr381 to Pro436, Gln457 to Gly525, and Pro555 to Asp618. Ser96 carries the phosphoserine modification. Low complexity predominate over residues Ser96–Thr108. The segment covering His109 to Ala122 has biased composition (gly residues). The residue at position 117 (Thr117) is a Phosphothreonine. The segment covering Val208–Pro217 has biased composition (polar residues). 2 consecutive repeat copies span residues Arg236 to His265 and Pro410 to Val438. A 4 X 29 AA approximate repeats region spans residues Arg236 to Val650. Residues Thr239–Ala257 show a composition bias toward pro residues. The segment covering Gly394–Ala413 has biased composition (low complexity). 2 stretches are compositionally biased toward pro residues: residues Ala422–Thr433 and Pro502–Pro515. Low complexity-rich tracts occupy residues Pro555–Pro573 and Pro583–Pro601. 2 repeat units span residues Ser589–Ala616 and Ser622–Val650. Pro residues predominate over residues Pro603–Pro614. Disordered regions lie at residues Ala666 to Pro711 and Pro961 to Pro1146. Pro residues predominate over residues Ala670–Ser694. The segment covering Thr977–Ala986 has biased composition (basic and acidic residues). Phosphoserine occurs at positions 978 and 987. A compositionally biased stretch (low complexity) spans Ala1021–Pro1034. The tract at residues Trp1024 to Asp1054 is required for interaction with GET4. A Nuclear localization site motif is present at residues Ala1026–Met1068. The segment at Ile1036–Pro1146 is sufficient for the delivery of client proteins to the endoplasmic reticulum. Thr1067 carries the post-translational modification Phosphothreonine. Residues Gly1072–Asn1129 are BAG-similar domain, required and sufficient for interaction with UBL4A. The segment covering Ala1080–Ala1090 has biased composition (low complexity). 2 positions are modified to phosphoserine: Ser1095 and Ser1131.

In terms of assembly, component of the BAG6/BAT3 complex, also named BAT3 complex, at least composed of BAG6, UBL4A and GET4/TRC35. Interacts with GET4; the interaction is direct and localizes BAG6 in the cytosol. Interacts with UBL4A; the interaction is direct and required for UBL4A protein stability. Interacts with AIFM1. Interacts with HSPA2. Interacts with CTCFL. Interacts with p300/EP300. Interacts (via ubiquitin-like domain) with RNF126; required for BAG6-dependent ubiquitination of proteins mislocalized to the cytosol. Interacts (via ubiquitin-like domain) with SGTA; SGTA competes with RNF126 by binding the same region of BAG6, thereby promoting deubiquitination of BAG6-target proteins and rescuing them from degradation. Interacts with ricin A chain. Interacts with VCP and AMFR; both form the VCP/p97-AMFR/gp78 complex. Interacts with SYVN1. Interacts with USP13; the interaction is direct and may mediate UBL4A deubiquitination. Interacts with ZFAND2B. Interacts with KPNA2. Interacts with UBQLN4. Ricin can induce a cleavage by the caspase CASP3. The released C-terminal peptide induces apoptosis.

Its subcellular location is the cytoplasm. It is found in the cytosol. The protein localises to the nucleus. It localises to the secreted. The protein resides in the extracellular exosome. Functionally, ATP-independent molecular chaperone preventing the aggregation of misfolded and hydrophobic patches-containing proteins. Functions as part of a cytosolic protein quality control complex, the BAG6/BAT3 complex, which maintains these client proteins in a soluble state and participates in their proper delivery to the endoplasmic reticulum or alternatively can promote their sorting to the proteasome where they undergo degradation. The BAG6/BAT3 complex is involved in the post-translational delivery of tail-anchored/type II transmembrane proteins to the endoplasmic reticulum membrane. Recruited to ribosomes, it interacts with the transmembrane region of newly synthesized tail-anchored proteins and together with SGTA and ASNA1 mediates their delivery to the endoplasmic reticulum. Client proteins that cannot be properly delivered to the endoplasmic reticulum are ubiquitinated by RNF126, an E3 ubiquitin-protein ligase associated with BAG6 and are sorted to the proteasome. SGTA which prevents the recruitment of RNF126 to BAG6 may negatively regulate the ubiquitination and the proteasomal degradation of client proteins. Similarly, the BAG6/BAT3 complex also functions as a sorting platform for proteins of the secretory pathway that are mislocalized to the cytosol either delivering them to the proteasome for degradation or to the endoplasmic reticulum. The BAG6/BAT3 complex also plays a role in the endoplasmic reticulum-associated degradation (ERAD), a quality control mechanism that eliminates unwanted proteins of the endoplasmic reticulum through their retrotranslocation to the cytosol and their targeting to the proteasome. It maintains these retrotranslocated proteins in an unfolded yet soluble state condition in the cytosol to ensure their proper delivery to the proteasome. BAG6 is also required for selective ubiquitin-mediated degradation of defective nascent chain polypeptides by the proteasome. In this context, it may participate in the production of antigenic peptides and play a role in antigen presentation in immune response. BAG6 is also involved in endoplasmic reticulum stress-induced pre-emptive quality control, a mechanism that selectively attenuates the translocation of newly synthesized proteins into the endoplasmic reticulum and reroutes them to the cytosol for proteasomal degradation. BAG6 may ensure the proper degradation of these proteins and thereby protects the endoplasmic reticulum from protein overload upon stress. By inhibiting the polyubiquitination and subsequent proteasomal degradation of HSPA2 it may also play a role in the assembly of the synaptonemal complex during spermatogenesis. Also positively regulates apoptosis by interacting with and stabilizing the proapoptotic factor AIFM1. By controlling the steady-state expression of the IGF1R receptor, indirectly regulates the insulin-like growth factor receptor signaling pathway. Involved in DNA damage-induced apoptosis: following DNA damage, accumulates in the nucleus and forms a complex with p300/EP300, enhancing p300/EP300-mediated p53/TP53 acetylation leading to increase p53/TP53 transcriptional activity. When nuclear, may also act as a component of some chromatin regulator complex that regulates histone 3 'Lys-4' dimethylation (H3K4me2). Its function is as follows. Released extracellularly via exosomes, it is a ligand of the natural killer/NK cells receptor NCR3 and stimulates NK cells cytotoxicity. It may thereby trigger NK cells cytotoxicity against neighboring tumor cells and immature myeloid dendritic cells (DC). In terms of biological role, may mediate ricin-induced apoptosis. This Rattus norvegicus (Rat) protein is Large proline-rich protein BAG6.